We begin with the raw amino-acid sequence, 526 residues long: Thymocyte selection-associated high mobility group box protein TOX (526 aa).

The segment covering 194-203 has biased composition (polar residues); it reads NMGGTNVAHN. The disordered stretch occupies residues 194–264; sequence NMGGTNVAHN…KKDPNEPQKP (71 aa). Positions 209-220 are enriched in low complexity; that stretch reads GSKSATPSPSSS. A compositionally biased stretch (basic and acidic residues) spans 228 to 245; sequence DASKINGGEKRPASDMGK. The Nuclear localization signal signature appears at 237–256; that stretch reads KRPASDMGKKPKTPKKKKKK. Basic residues predominate over residues 246–256; the sequence is KPKTPKKKKKK. Positions 261-329 form a DNA-binding region, HMG box; it reads PQKPVSAYAL…EYLKQLAAYR (69 aa).

Belongs to the high motility group (HMG) box superfamily. As to quaternary structure, interacts with HBO1 complex composed at least of KAT7/HBO1, ING4, MEAF6, and JADE2; this complex is involved in histone acetylation. Interacts with DNMT1, LEO1, PAF1, SAP130 and SIN3A; these interactors regulate chromatin remodeling. Interacts with an array of proteins involved in RNA processing and translation and DNA replication. As to expression, expressed in neurons of the subventricular zone (at protein level). Expressed in distinct subpopulations of thymocytes undergoing positive selection: double CD4-positive CD8-positive (DP) cells, CD4-positive CD8-low transitional cells and in single CD4-positive and CD8-positive cells (at protein level). Expressed in ILC progenitors and mature ILC subsets: ILC1, ILC2 and ILC3 (at protein level). Expressed in lymphoid tissue-inducer cells and bone marrow NK cell subsets. Abundant in thymus, liver and brain. Also detected in small intestine, spleen, stomach and testis. Highly expressed in tumor-infiltrating CD8-positive T cells (at protein level).

Its subcellular location is the nucleus. Functionally, transcriptional regulator with a major role in neural stem cell commitment and corticogenesis as well as in lymphoid cell development and lymphoid tissue organogenesis. Binds to GC-rich DNA sequences in the proximity of transcription start sites and may alter chromatin structure, modifying access of transcription factors to DNA. During cortical development, controls the neural stem cell pool by inhibiting the switch from proliferative to differentiating progenitors. Beyond progenitor cells, promotes neurite outgrowth in newborn neurons migrating to reach the cortical plate. May activate or repress critical genes for neural stem cell fate such as SOX2, EOMES and ROBO2. Plays an essential role in the development of lymphoid tissue-inducer (LTi) cells, a subset necessary for the formation of secondary lymphoid organs: peripheral lymph nodes and Peyer's patches. Acts as a developmental checkpoint and regulates thymocyte positive selection toward T cell lineage commitment. Required for the development of various T cell subsets, including CD4-positive helper T cells, CD8-positive cytotoxic T cells, regulatory T cells and CD1D-dependent natural killer T (NKT) cells. Required for the differentiation of common lymphoid progenitors (CMP) to innate lymphoid cells (ILC). May regulate the NOTCH-mediated gene program, promoting differentiation of the ILC lineage. Required at the progenitor phase of NK cell development in the bone marrow to specify NK cell lineage commitment. Upon chronic antigen stimulation, diverts T cell development by promoting the generation of exhaustive T cells, while suppressing effector and memory T cell programming. May regulate the expression of genes encoding inhibitory receptors such as PDCD1 and induce the exhaustion program, to prevent the overstimulation of T cells and activation-induced cell death. The chain is Thymocyte selection-associated high mobility group box protein TOX from Mus musculus (Mouse).